An 837-amino-acid chain; its full sequence is Ribosome biogenesis ATPase RIX7 (837 aa).

Disordered regions lie at residues 36-56 (RSLR…EEDE) and 149-207 (ITST…LKSL). Serine 42 carries the phosphoserine modification. Residues 43–56 (QGEEGENNEGEEDE) show a composition bias toward acidic residues. Residues 149 to 163 (ITSTWSKSGSVSESI) show a composition bias toward polar residues. Residues 176 to 192 (KSKKRSKEGTCKVKRQK) are compositionally biased toward basic residues. 246 to 253 (GPPGCGKT) is an ATP binding site. Residues 443 to 468 (PTTATDSSEDNMEIDETANGDESSLK) form a disordered region. Positions 449–461 (SSEDNMEIDETAN) are enriched in acidic residues. Residue 574–581 (GPPGCGKT) coordinates ATP.

The protein belongs to the AAA ATPase family.

It is found in the nucleus. It localises to the nucleolus. Functionally, involved in ribosome biogenesis. Seems to be required for restructuring nucleoplasmic 60S pre-ribosomal particles to make them competent for nuclear export. The chain is Ribosome biogenesis ATPase RIX7 (RIX7) from Saccharomyces cerevisiae (strain ATCC 204508 / S288c) (Baker's yeast).